The chain runs to 292 residues: Ribosomal protein L11 methyltransferase (292 aa).

Positions 143, 164, 186, and 228 each coordinate S-adenosyl-L-methionine.

The protein belongs to the methyltransferase superfamily. PrmA family.

It localises to the cytoplasm. It carries out the reaction L-lysyl-[protein] + 3 S-adenosyl-L-methionine = N(6),N(6),N(6)-trimethyl-L-lysyl-[protein] + 3 S-adenosyl-L-homocysteine + 3 H(+). In terms of biological role, methylates ribosomal protein L11. This Aeromonas hydrophila subsp. hydrophila (strain ATCC 7966 / DSM 30187 / BCRC 13018 / CCUG 14551 / JCM 1027 / KCTC 2358 / NCIMB 9240 / NCTC 8049) protein is Ribosomal protein L11 methyltransferase.